We begin with the raw amino-acid sequence, 960 residues long: Glycine dehydrogenase (decarboxylating) (960 aa).

An N6-(pyridoxal phosphate)lysine modification is found at Lys709.

This sequence belongs to the GcvP family. The glycine cleavage system is composed of four proteins: P, T, L and H. Pyridoxal 5'-phosphate serves as cofactor.

It catalyses the reaction N(6)-[(R)-lipoyl]-L-lysyl-[glycine-cleavage complex H protein] + glycine + H(+) = N(6)-[(R)-S(8)-aminomethyldihydrolipoyl]-L-lysyl-[glycine-cleavage complex H protein] + CO2. Its function is as follows. The glycine cleavage system catalyzes the degradation of glycine. The P protein binds the alpha-amino group of glycine through its pyridoxal phosphate cofactor; CO(2) is released and the remaining methylamine moiety is then transferred to the lipoamide cofactor of the H protein. The polypeptide is Glycine dehydrogenase (decarboxylating) (Hahella chejuensis (strain KCTC 2396)).